An 85-amino-acid chain; its full sequence is Large ribosomal subunit protein bL27 (85 aa).

Residues 1 to 10 show a composition bias toward gly residues; it reads MAQKKGGGST. The segment at 1-20 is disordered; that stretch reads MAQKKGGGSTRNGRDSKPKM.

The protein belongs to the bacterial ribosomal protein bL27 family.

The chain is Large ribosomal subunit protein bL27 from Delftia acidovorans (strain DSM 14801 / SPH-1).